A 313-amino-acid polypeptide reads, in one-letter code: MEMMNWERRSLLNELIHGLKAAKQLQGSSSPSLSASSSYLTTEIKENLLHNIVSSFKKAILMLNGSTTQHNPTIELAPDPLAHPGKVPGSPASITGNPRSEEFFNVRSKEFNLSSKKRKMLPKWTEQVRISPERGLEGPHDDIFSWRKYGQKDILGAKFPRSYYRCTFRNTQYCWATKQVQRSDGDPTIFEVTYRGTHTCSQGIPLPEKRETKPKHTVAVNYQNLRASLTVRTGGLGSEAFSFPVTSPLYTYESINGGGTFYHHVGSSGPSDFTGLISTNTSTGSSPIFDVNFQFDPTAEINTGFPTFFHNSI.

Residues Gly-135–Gly-203 constitute a DNA-binding region (WRKY).

This sequence belongs to the WRKY group III family.

The protein resides in the nucleus. Functionally, transcription factor. Interacts specifically with the W box (5'-(T)TGAC[CT]-3'), a frequently occurring elicitor-responsive cis-acting element. This is Probable WRKY transcription factor 41 (WRKY41) from Arabidopsis thaliana (Mouse-ear cress).